A 126-amino-acid polypeptide reads, in one-letter code: Glycine cleavage system H protein (126 aa).

Residues Asp19–Glu100 enclose the Lipoyl-binding domain. At Lys60 the chain carries N6-lipoyllysine.

It belongs to the GcvH family. As to quaternary structure, the glycine cleavage system is composed of four proteins: P, T, L and H. (R)-lipoate is required as a cofactor.

Functionally, the glycine cleavage system catalyzes the degradation of glycine. The H protein shuttles the methylamine group of glycine from the P protein to the T protein. The chain is Glycine cleavage system H protein from Koribacter versatilis (strain Ellin345).